Consider the following 510-residue polypeptide: Inositol-3-phosphate synthase (510 aa).

Residues G70, G71, N72, N73, D143, I180, Q190, R193, T230, A231, N232, T233, G281, S282, D306, S309, N340, N341, D342, K355, G393, D394, D422, and S423 each contribute to the NAD(+) site.

It belongs to the myo-inositol 1-phosphate synthase family. It depends on NAD(+) as a cofactor.

The protein localises to the cytoplasm. It localises to the cytosol. The protein resides in the nucleus. The catalysed reaction is D-glucose 6-phosphate = 1D-myo-inositol 3-phosphate. It functions in the pathway polyol metabolism; myo-inositol biosynthesis; myo-inositol from D-glucose 6-phosphate: step 1/2. Functionally, key enzyme in myo-inositol biosynthesis pathway that catalyzes the conversion of glucose 6-phosphate to 1-myo-inositol 1-phosphate in a NAD-dependent manner. The sequence is that of Inositol-3-phosphate synthase from Zea mays (Maize).